Reading from the N-terminus, the 424-residue chain is UDP-N-acetylglucosamine 1-carboxyvinyltransferase 3 (424 aa).

22–23 provides a ligand contact to phosphoenolpyruvate; that stretch reads KN. Arginine 94 contacts UDP-N-acetyl-alpha-D-glucosamine. The active-site Proton donor is the aspartate 118. UDP-N-acetyl-alpha-D-glucosamine-binding positions include 123-127, aspartate 306, and leucine 328; that span reads RPVDQ.

It belongs to the EPSP synthase family. MurA subfamily.

It is found in the cytoplasm. The enzyme catalyses phosphoenolpyruvate + UDP-N-acetyl-alpha-D-glucosamine = UDP-N-acetyl-3-O-(1-carboxyvinyl)-alpha-D-glucosamine + phosphate. It participates in cell wall biogenesis; peptidoglycan biosynthesis. Functionally, cell wall formation. Adds enolpyruvyl to UDP-N-acetylglucosamine. This is UDP-N-acetylglucosamine 1-carboxyvinyltransferase 3 from Symbiobacterium thermophilum (strain DSM 24528 / JCM 14929 / IAM 14863 / T).